The primary structure comprises 260 residues: Alpha-acetolactate decarboxylase (260 aa).

Belongs to the alpha-acetolactate decarboxylase family.

The enzyme catalyses (2S)-2-acetolactate + H(+) = (R)-acetoin + CO2. It participates in polyol metabolism; (R,R)-butane-2,3-diol biosynthesis; (R,R)-butane-2,3-diol from pyruvate: step 2/3. Converts acetolactate into acetoin, which can be excreted by the cells. This may be a mechanism for controlling the internal pH of cells in the stationary stage. The protein is Alpha-acetolactate decarboxylase (budA) of Klebsiella aerogenes (Enterobacter aerogenes).